The chain runs to 646 residues: MRTPGAGTASVASLGLLWLLGLPWTWSAAAAFGVYVGSGGWRFLRIVCKTARRDLFGLSVLIRVRLELRRHRRAGDTIPRIFQAVAQRQPERLALVDASSGICWTFAQLDTYSNAVANLFLQLGFAPGDVVAVFLEGRPEFVGLWLGLAKAGVVAALLNVNLRREPLAFCLGTSAAKALIYGGEMAAAVAEVSEQLGKSLLKFCSGDLGPESVLPDTQLLDPMLAEAPTTPLAQAPGKGMDDRLFYIYTSGTTGLPKAAIVVHSRYYRIAAFGHHSYSMRANDVLYDCLPLYHSAGNIMGVGQCIIYGLTVVLRKKFSASRFWDDCVKYNCTVVQYIGEICRYLLRQPVRDVERRHRVRLAVGNGLRPAIWEEFTQGFGVRQIGEFYGATECNCSIANMDGKVGSCGFNSRILTHVYPIRLVKVNEDTMEPLRDSQGLCIPCQPGEPGLLVGQINQQDPLRRFDGYVSDSATNKKIAHSVFRKGDSAYLSGDVLVMDELGYMYFRDRSGDTFRWRGENVSTTEVEAVLSRLLGQTDVAVYGVAVPGVEGKSGMAAIADPHNQLDPNSMYQELQKVLASYAQPIFLRLLPQVDTTGTFKIQKTRLQREGFDPRQTSDRLFFLDLKQGRYLPLDERVHARICAGDFSL.

At 1-13 the chain is on the extracellular side; the sequence is MRTPGAGTASVAS. The chain crosses the membrane as a helical span at residues 14-34; the sequence is LGLLWLLGLPWTWSAAAAFGV. Over 35–646 the chain is Cytoplasmic; sequence YVGSGGWRFL…ARICAGDFSL (612 aa). Residues 191 to 475 are sufficient for oligomerization; sequence EVSEQLGKSL…YVSDSATNKK (285 aa). An AMP-binding site is contributed by 246-257; it reads YIYTSGTTGLPK.

Belongs to the ATP-dependent AMP-binding enzyme family. In terms of assembly, self-associates. May function as a homodimer. Interacts with EPRS1; mediates the translocation of SLC27A1 from the cytoplasm to the plasma membrane thereby increasing the uptake of long-chain fatty acids. Interacts with DGAT2 and this interaction is enhanced in the presence of ZFYVE1. Expressed in muscle.

It localises to the cell membrane. The protein localises to the endomembrane system. It is found in the cytoplasm. It catalyses the reaction a fatty acid(in) = a fatty acid(out). The catalysed reaction is (9Z)-octadecenoate(out) = (9Z)-octadecenoate(in). The enzyme catalyses hexadecanoate(out) = hexadecanoate(in). It carries out the reaction (5Z,8Z,11Z,14Z)-eicosatetraenoate(out) = (5Z,8Z,11Z,14Z)-eicosatetraenoate(in). It catalyses the reaction (9Z,12Z)-octadecadienoate(out) = (9Z,12Z)-octadecadienoate(in). The catalysed reaction is a long-chain fatty acid + ATP + CoA = a long-chain fatty acyl-CoA + AMP + diphosphate. The enzyme catalyses (5Z,8Z,11Z,14Z)-eicosatetraenoate + ATP + CoA = (5Z,8Z,11Z,14Z)-eicosatetraenoyl-CoA + AMP + diphosphate. It carries out the reaction a very long-chain fatty acid + ATP + CoA = a very long-chain fatty acyl-CoA + AMP + diphosphate. It catalyses the reaction tetracosanoate + ATP + CoA = tetracosanoyl-CoA + AMP + diphosphate. Inhibited by Triacsin C. In terms of biological role, mediates the import of long-chain fatty acids (LCFA) into the cell by facilitating their transport at the plasma membrane. Also functions as an acyl-CoA ligase catalyzing the ATP-dependent formation of fatty acyl-CoA using LCFA and very-long-chain fatty acids (VLCFA) as substrates, which prevents fatty acid efflux from cells and might drive more fatty acid uptake. May act directly as a bona fide transporter, or alternatively, in a cytoplasmic or membrane-associated multimeric protein complex to trap and draw fatty acids towards accumulation. Plays a pivotal role in regulating available LCFA substrates from exogenous sources in tissues undergoing high levels of beta-oxidation or triglyceride synthesis. May be involved in regulation of cholesterol metabolism. Probably involved in fatty acid transport across the blood barrier. This is Long-chain fatty acid transport protein 1 from Rattus norvegicus (Rat).